A 479-amino-acid chain; its full sequence is Protein ORD (479 aa).

A disordered region spans residues 102 to 140 (KEEETEPESESDLDEGPSTSKQALERMVQRAERKAKEAS). Acidic residues predominate over residues 104-116 (EETEPESESDLDE). Residues 124 to 140 (ALERMVQRAERKAKEAS) show a composition bias toward basic and acidic residues.

In terms of assembly, interacts with Sce.

It localises to the nucleus. The protein resides in the chromosome. The protein localises to the centromere. In terms of biological role, essential for proper maintenance of sister-chromatid cohesion in both male and female meiosis. Mutations in ord cause premature separation of the sister chromatids in meiosis I and random segregation in both meiotic divisions. Required for chiasma maintenance in female meiosis. Mutations in ord reduce recombination in female meiosis. This Drosophila melanogaster (Fruit fly) protein is Protein ORD (ord).